Consider the following 311-residue polypeptide: Ribosomal RNA small subunit methyltransferase H (311 aa).

Residues 33-35 (GGH), aspartate 53, phenylalanine 77, aspartate 98, and glutamine 105 contribute to the S-adenosyl-L-methionine site.

The protein belongs to the methyltransferase superfamily. RsmH family.

It localises to the cytoplasm. It catalyses the reaction cytidine(1402) in 16S rRNA + S-adenosyl-L-methionine = N(4)-methylcytidine(1402) in 16S rRNA + S-adenosyl-L-homocysteine + H(+). In terms of biological role, specifically methylates the N4 position of cytidine in position 1402 (C1402) of 16S rRNA. In Thiobacillus denitrificans (strain ATCC 25259 / T1), this protein is Ribosomal RNA small subunit methyltransferase H.